Here is a 141-residue protein sequence, read N- to C-terminus: MAKQVTGQAKFQVPGGQATPAPPVGTSLGKYGVNLGQFVQQFNDRTKEYNGTPIPVIVTVYNDRSFDFITKSPPAASMLMQSAGIAKGSGVPNKDKVATVTRAQCEEIAQKKMEDLNARDIDQATRMIEGTARSMGIIVDG.

The disordered stretch occupies residues 1-23; the sequence is MAKQVTGQAKFQVPGGQATPAPP.

Belongs to the universal ribosomal protein uL11 family. As to quaternary structure, part of the ribosomal stalk of the 50S ribosomal subunit. Interacts with L10 and the large rRNA to form the base of the stalk. L10 forms an elongated spine to which L12 dimers bind in a sequential fashion forming a multimeric L10(L12)X complex. One or more lysine residues are methylated.

Functionally, forms part of the ribosomal stalk which helps the ribosome interact with GTP-bound translation factors. The sequence is that of Large ribosomal subunit protein uL11 from Rhodopirellula baltica (strain DSM 10527 / NCIMB 13988 / SH1).